The following is a 413-amino-acid chain: DnaJ protein homolog xdj1 (413 aa).

The J domain maps to 6–73; it reads KLYDILEVHF…ESREMYDMYG (68 aa). The CR-type zinc-finger motif lies at 134–219; that stretch reads GKEVKLRATR…CKGSGTVPEQ (86 aa). 4 CXXCXGXG motif repeats span residues 147–154, 164–171, 191–198, and 207–214; these read CPRCQGRG, CLSCDGKG, CDTCNGKG, and CKHCKGSG. C410 bears the Cysteine methyl ester mark. C410 carries the S-farnesyl cysteine lipid modification. A propeptide spans 411–413 (removed in mature form); that stretch reads QAQ.

It localises to the endoplasmic reticulum membrane. The protein is DnaJ protein homolog xdj1 (xdj1) of Schizosaccharomyces pombe (strain 972 / ATCC 24843) (Fission yeast).